Consider the following 238-residue polypeptide: Ribonuclease M (238 aa).

5 disulfides stabilise this stretch: Cys5/Cys22, Cys13/Cys58, Cys21/Cys126, Cys66/Cys118, and Cys191/Cys225. The active site involves His51. Asn74 carries an N-linked (GlcNAc...) asparagine glycan. Residues Glu111 and His115 contribute to the active site.

It belongs to the RNase T2 family.

It carries out the reaction a ribonucleotidyl-ribonucleotide-RNA + H2O = a 3'-end 3'-phospho-ribonucleotide-RNA + a 5'-end dephospho-ribonucleoside-RNA + H(+). Its function is as follows. This is a base non-specific and adenylic acid preferential ribonuclease. The sequence is that of Ribonuclease M from Aspergillus phoenicis (Aspergillus saitoi).